Reading from the N-terminus, the 64-residue chain is Large ribosomal subunit protein bL35 (64 aa).

Belongs to the bacterial ribosomal protein bL35 family.

The chain is Large ribosomal subunit protein bL35 from Kineococcus radiotolerans (strain ATCC BAA-149 / DSM 14245 / SRS30216).